Reading from the N-terminus, the 467-residue chain is Fumarate hydratase class II (467 aa).

Residues 98 to 100, arginine 126, 129 to 132, 139 to 141, and threonine 187 each bind substrate; these read SGT, HPND, and SSN. Histidine 188 serves as the catalytic Proton donor/acceptor. Serine 318 is an active-site residue. Residues serine 319 and 324–326 contribute to the substrate site; that span reads KVN.

Belongs to the class-II fumarase/aspartase family. Fumarase subfamily. In terms of assembly, homotetramer.

The protein resides in the cytoplasm. The enzyme catalyses (S)-malate = fumarate + H2O. It functions in the pathway carbohydrate metabolism; tricarboxylic acid cycle; (S)-malate from fumarate: step 1/1. Involved in the TCA cycle. Catalyzes the stereospecific interconversion of fumarate to L-malate. In Escherichia coli O6:H1 (strain CFT073 / ATCC 700928 / UPEC), this protein is Fumarate hydratase class II.